We begin with the raw amino-acid sequence, 259 residues long: Ribonuclease HII (259 aa).

Residues 69 to 257 form the RNase H type-2 domain; it reads VAVCGVDEVG…VLEESQGLIY (189 aa). The a divalent metal cation site is built by Asp-75, Glu-76, and Asp-167.

It belongs to the RNase HII family. Mn(2+) is required as a cofactor. It depends on Mg(2+) as a cofactor.

Its subcellular location is the cytoplasm. It carries out the reaction Endonucleolytic cleavage to 5'-phosphomonoester.. Functionally, endonuclease that specifically degrades the RNA of RNA-DNA hybrids. The protein is Ribonuclease HII of Shouchella clausii (strain KSM-K16) (Alkalihalobacillus clausii).